The sequence spans 445 residues: tRNA(Ile)-lysidine synthase (445 aa).

19–24 (SGGIDS) is an ATP binding site.

This sequence belongs to the tRNA(Ile)-lysidine synthase family.

It is found in the cytoplasm. It carries out the reaction cytidine(34) in tRNA(Ile2) + L-lysine + ATP = lysidine(34) in tRNA(Ile2) + AMP + diphosphate + H(+). Its function is as follows. Ligates lysine onto the cytidine present at position 34 of the AUA codon-specific tRNA(Ile) that contains the anticodon CAU, in an ATP-dependent manner. Cytidine is converted to lysidine, thus changing the amino acid specificity of the tRNA from methionine to isoleucine. This Buchnera aphidicola subsp. Schizaphis graminum (strain Sg) protein is tRNA(Ile)-lysidine synthase.